The sequence spans 384 residues: MVLRETDLIPIYQHLHQIPEIGLQEHETQAYLLSIIGKMPQEWLTIKTIPTLDTAILVKVSGLKHDYRIGYRTDIDALPVTENTGLPFASTHPGVMHACGHDIHMSVALGILSYFAENRPATDMVFMFQPAEENASGGQRLYESGALDGDWMPDEIFAFHDNPNLPTGAIGCRMGTLFAGTCEIHAHLSGKSGHAAYPHQANDMVVAGAALVSQLQTIVARNVDPIQSGVVTLGHFTAGTIGNVIAGEAQIDGTIRALTQEMNMHIQRRVRTITEGIALAYDCNIDLKLNQGGYYPVENNDAITADFIKYMQEDDDVNFIETEPAMTGEDFGYLIHQIPGTMFWLGVDSPYSLHSENMVPHTAAIMSGVNAMTSFLTHRNALHK.

Residue Asp-74 is part of the active site. Catalysis depends on Glu-133, which acts as the Proton acceptor.

This sequence belongs to the peptidase M20A family. N-acetyldiaminopimelate deacetylase subfamily.

It catalyses the reaction N-acetyl-(2S,6S)-2,6-diaminopimelate + H2O = (2S,6S)-2,6-diaminopimelate + acetate. Its pathway is amino-acid biosynthesis; L-lysine biosynthesis via DAP pathway; LL-2,6-diaminopimelate from (S)-tetrahydrodipicolinate (acetylase route): step 3/3. In terms of biological role, catalyzes the conversion of N-acetyl-diaminopimelate to diaminopimelate and acetate. This Lactiplantibacillus plantarum (strain ATCC BAA-793 / NCIMB 8826 / WCFS1) (Lactobacillus plantarum) protein is N-acetyldiaminopimelate deacetylase.